The sequence spans 750 residues: Neprilysin (750 aa).

The span at 1-14 (MGKSESQMDITDIN) shows a compositional bias: polar residues. Residues 1 to 20 (MGKSESQMDITDINTPKPKK) form a disordered region. G2 carries N-myristoyl glycine lipidation. Residues 2–28 (GKSESQMDITDINTPKPKKKQRWTPLE) are Cytoplasmic-facing. A phosphoserine mark is found at S4 and S6. A Stop-transfer sequence motif is present at residues 16 to 23 (PKPKKKQR). A helical; Signal-anchor for type II membrane protein transmembrane segment spans residues 29–51 (ISLSVLVLLLTIIAVTMIALYAT). Residues 52–750 (YDDGICKSSD…MNPEKKCRVW (699 aa)) lie on the Extracellular side of the membrane. The 695-residue stretch at 56–750 (ICKSSDCIKS…MNPEKKCRVW (695 aa)) folds into the Peptidase M13 domain. Cystine bridges form between C57/C62, C80/C735, C88/C695, C143/C411, C234/C242, and C621/C747. A peptide is bound at residue R103. N-linked (GlcNAc...) asparagine glycosylation occurs at N145. Residues N285 and N325 are each glycosylated (N-linked (GlcNAc...) asparagine). H584 is a Zn(2+) binding site. Residue E585 is part of the active site. Zn(2+) is bound at residue H588. N-linked (GlcNAc...) asparagine glycosylation occurs at N628. E647 provides a ligand contact to Zn(2+). The Proton donor role is filled by D651.

The protein belongs to the peptidase M13 family. It depends on Zn(2+) as a cofactor. In terms of processing, myristoylation is a determinant of membrane targeting. Glycosylation at Asn-628 is necessary both for surface expression and neutral endopeptidase activity.

The protein localises to the cell membrane. The catalysed reaction is Preferential cleavage of polypeptides between hydrophobic residues, particularly with Phe or Tyr at P1'.. It catalyses the reaction substance P + H2O = substance P(1-9) + L-Leu-L-Met-NH2. The enzyme catalyses substance P + H2O = substance P(1-7) + L-Phe-Gly-L-Leu-L-Met-NH2. It carries out the reaction neurotensin + H2O = neurotensin(1-11) + L-isoleucyl-L-leucine. The catalysed reaction is neurotensin + H2O = neurotensin(1-10) + L-tyrosyl-L-isoleucyl-L-leucine. Inhibited in a dose dependent manner by opiorphin. Activated by K49-P1-20, a twenty-residue synthetic peptide shortened from the snake B.asper myotoxin II. Its function is as follows. Thermolysin-like specificity, but is almost confined on acting on polypeptides of up to 30 amino acids. Biologically important in the destruction of opioid peptides such as Met- and Leu-enkephalins by cleavage of a Gly-Phe bond. Catalyzes cleavage of bradykinin, substance P and neurotensin peptides. Able to cleave angiotensin-1, angiotensin-2 and angiotensin 1-9. Involved in the degradation of atrial natriuretic factor (ANF) and brain natriuretic factor (BNP(1-32)). Displays UV-inducible elastase activity toward skin preelastic and elastic fibers. This chain is Neprilysin, found in Homo sapiens (Human).